The chain runs to 414 residues: 3-oxoacyl-[acyl-carrier-protein] synthase 2 (414 aa).

Residues 4-411 (NIRVVITGMG…GHNAVLVFKK (408 aa)) form the Ketosynthase family 3 (KS3) domain. Residues Cys165, His304, and His341 each act as for beta-ketoacyl synthase activity in the active site.

The protein belongs to the thiolase-like superfamily. Beta-ketoacyl-ACP synthases family.

The enzyme catalyses a fatty acyl-[ACP] + malonyl-[ACP] + H(+) = a 3-oxoacyl-[ACP] + holo-[ACP] + CO2. The catalysed reaction is (9Z)-hexadecenoyl-[ACP] + malonyl-[ACP] + H(+) = 3-oxo-(11Z)-octadecenoyl-[ACP] + holo-[ACP] + CO2. It functions in the pathway lipid metabolism; fatty acid biosynthesis. Functionally, involved in the type II fatty acid elongation cycle. Catalyzes the elongation of a wide range of acyl-ACP by the addition of two carbons from malonyl-ACP to an acyl acceptor. Can efficiently catalyze the conversion of palmitoleoyl-ACP (cis-hexadec-9-enoyl-ACP) to cis-vaccenoyl-ACP (cis-octadec-11-enoyl-ACP), an essential step in the thermal regulation of fatty acid composition. The sequence is that of 3-oxoacyl-[acyl-carrier-protein] synthase 2 (fabF) from Staphylococcus aureus (strain MRSA252).